The sequence spans 180 residues: ATP-dependent protease subunit HslV (180 aa).

Thr5 is an active-site residue. Residues Gly161, Cys164, and Thr167 each contribute to the Na(+) site.

The protein belongs to the peptidase T1B family. HslV subfamily. As to quaternary structure, a double ring-shaped homohexamer of HslV is capped on each side by a ring-shaped HslU homohexamer. The assembly of the HslU/HslV complex is dependent on binding of ATP.

It is found in the cytoplasm. The catalysed reaction is ATP-dependent cleavage of peptide bonds with broad specificity.. With respect to regulation, allosterically activated by HslU binding. Protease subunit of a proteasome-like degradation complex believed to be a general protein degrading machinery. The sequence is that of ATP-dependent protease subunit HslV from Campylobacter jejuni subsp. jejuni serotype O:6 (strain 81116 / NCTC 11828).